We begin with the raw amino-acid sequence, 778 residues long: Ribonucleoside-diphosphate reductase large subunit (778 aa).

Substrate-binding positions include S177, 192–193, G221, 419–423, and 613–617; these read SC, NLCIE, and PTATS. A disulfide bridge links C193 with C439. Catalysis depends on N419, which acts as the Proton acceptor. C421 (cysteine radical intermediate) is an active-site residue. The active-site Proton acceptor is the E423.

This sequence belongs to the ribonucleoside diphosphate reductase large chain family. As to quaternary structure, heterotetramer composed of a homodimer of the large subunit (R1) and a homodimer of the small subunit (R2). Larger multisubunit protein complex are also active, composed of (R1)n(R2)n.

The catalysed reaction is a 2'-deoxyribonucleoside 5'-diphosphate + [thioredoxin]-disulfide + H2O = a ribonucleoside 5'-diphosphate + [thioredoxin]-dithiol. Under complex allosteric control mediated by deoxynucleoside triphosphates and ATP binding. The type of nucleotide bound at the specificity site determines substrate preference. It seems probable that ATP makes the enzyme reduce CDP and UDP, dGTP favors ADP reduction and dTTP favors GDP reduction. Functionally, ribonucleoside-diphosphate reductase holoenzyme provides the precursors necessary for viral DNA synthesis. Allows virus growth in non-dividing cells. Catalyzes the biosynthesis of deoxyribonucleotides from the corresponding ribonucleotides. The chain is Ribonucleoside-diphosphate reductase large subunit from African swine fever virus (isolate Tick/South Africa/Pretoriuskop Pr4/1996) (ASFV).